The chain runs to 263 residues: Endonuclease 8 (263 aa).

Pro2 acts as the Schiff-base intermediate with DNA in catalysis. The active-site Proton donor is the Glu3. Lys53 (proton donor; for beta-elimination activity) is an active-site residue. Residues Gln70, Arg125, and Asn169 each contribute to the DNA site. The segment at 229-263 (KVFHRDGEPCERCGGIIEKTTLSSRPFYWCPGCQH) adopts an FPG-type zinc-finger fold. Arg253 (proton donor; for delta-elimination activity) is an active-site residue.

It belongs to the FPG family. The cofactor is Zn(2+).

The catalysed reaction is 2'-deoxyribonucleotide-(2'-deoxyribose 5'-phosphate)-2'-deoxyribonucleotide-DNA = a 3'-end 2'-deoxyribonucleotide-(2,3-dehydro-2,3-deoxyribose 5'-phosphate)-DNA + a 5'-end 5'-phospho-2'-deoxyribonucleoside-DNA + H(+). Functionally, involved in base excision repair of DNA damaged by oxidation or by mutagenic agents. Acts as a DNA glycosylase that recognizes and removes damaged bases. Has a preference for oxidized pyrimidines, such as thymine glycol, 5,6-dihydrouracil and 5,6-dihydrothymine. Has AP (apurinic/apyrimidinic) lyase activity and introduces nicks in the DNA strand. Cleaves the DNA backbone by beta-delta elimination to generate a single-strand break at the site of the removed base with both 3'- and 5'-phosphates. This is Endonuclease 8 from Escherichia coli O127:H6 (strain E2348/69 / EPEC).